The chain runs to 230 residues: Ureidoacrylate amidohydrolase RutB (230 aa).

D23 functions as the Proton acceptor in the catalytic mechanism. The active site involves K132. The active-site Nucleophile is the C165.

This sequence belongs to the isochorismatase family. RutB subfamily.

The enzyme catalyses (Z)-3-ureidoacrylate + H2O + H(+) = (Z)-3-aminoacrylate + NH4(+) + CO2. It catalyses the reaction (Z)-3-ureidoacrylate + H2O = (Z)-3-aminoacrylate + carbamate + H(+). It carries out the reaction (Z)-2-methylureidoacrylate + H2O + H(+) = (Z)-2-methylaminoacrylate + NH4(+) + CO2. Hydrolyzes ureidoacrylate to form aminoacrylate and carbamate. The carbamate hydrolyzes spontaneously, thereby releasing one of the nitrogen atoms of the pyrimidine ring as ammonia and one of its carbon atoms as CO2. The chain is Ureidoacrylate amidohydrolase RutB from Yersinia enterocolitica serotype O:8 / biotype 1B (strain NCTC 13174 / 8081).